A 100-amino-acid chain; its full sequence is Small ribosomal subunit protein uS14c (100 aa).

It belongs to the universal ribosomal protein uS14 family. In terms of assembly, part of the 30S ribosomal subunit.

Its subcellular location is the plastid. The protein localises to the chloroplast. Its function is as follows. Binds 16S rRNA, required for the assembly of 30S particles. The chain is Small ribosomal subunit protein uS14c from Nasturtium officinale (Watercress).